The primary structure comprises 192 residues: Amelogenin, Y isoform (192 aa).

Residues Met1–Ser16 form the signal peptide. The disordered stretch occupies residues Gln73–Asp192. The span at Pro87–Pro105 shows a compositional bias: low complexity. Residues His108–Gln117 show a composition bias toward polar residues. Over residues Pro132 to Pro173 the composition is skewed to pro residues.

It belongs to the amelogenin family.

The protein localises to the secreted. The protein resides in the extracellular space. It localises to the extracellular matrix. Plays a role in the biomineralization of teeth. Seems to regulate the formation of crystallites during the secretory stage of tooth enamel development. Thought to play a major role in the structural organization and mineralization of developing enamel. This chain is Amelogenin, Y isoform (AMELY), found in Bos taurus (Bovine).